The primary structure comprises 162 residues: 2-C-methyl-D-erythritol 2,4-cyclodiphosphate synthase (162 aa).

Residues Asp-8 and His-10 each coordinate a divalent metal cation. 4-CDP-2-C-methyl-D-erythritol 2-phosphate is bound by residues 8-10 (DVH) and 36-37 (HS). His-44 contributes to the a divalent metal cation binding site. 4-CDP-2-C-methyl-D-erythritol 2-phosphate is bound by residues 58-60 (DIG), 63-67 (FPDTD), 102-108 (AQAPKMA), 134-137 (TTTE), Phe-141, and Arg-144.

Belongs to the IspF family. Homotrimer. It depends on a divalent metal cation as a cofactor.

The catalysed reaction is 4-CDP-2-C-methyl-D-erythritol 2-phosphate = 2-C-methyl-D-erythritol 2,4-cyclic diphosphate + CMP. Its pathway is isoprenoid biosynthesis; isopentenyl diphosphate biosynthesis via DXP pathway; isopentenyl diphosphate from 1-deoxy-D-xylulose 5-phosphate: step 4/6. Its function is as follows. Involved in the biosynthesis of isopentenyl diphosphate (IPP) and dimethylallyl diphosphate (DMAPP), two major building blocks of isoprenoid compounds. Catalyzes the conversion of 4-diphosphocytidyl-2-C-methyl-D-erythritol 2-phosphate (CDP-ME2P) to 2-C-methyl-D-erythritol 2,4-cyclodiphosphate (ME-CPP) with a corresponding release of cytidine 5-monophosphate (CMP). The polypeptide is 2-C-methyl-D-erythritol 2,4-cyclodiphosphate synthase (Yersinia pseudotuberculosis serotype IB (strain PB1/+)).